The primary structure comprises 47 residues: Small, acid-soluble spore protein N (47 aa).

Positions 1–47 (MSNPRGNPKYFNPNHLGTQPRAAGGNKGKKMQDQSGQHAQVIQTKGE) are disordered. Positions 33–47 (DQSGQHAQVIQTKGE) are enriched in polar residues.

The protein belongs to the SspN family.

The protein resides in the spore core. The chain is Small, acid-soluble spore protein N from Geobacillus sp. (strain WCH70).